Here is a 207-residue protein sequence, read N- to C-terminus: Protein GrpE (207 aa).

Residues 1–33 (MTDPNGPKDIPEQSAEAAEPVVSKPYIMPDDPE) form a disordered region.

The protein belongs to the GrpE family. Homodimer.

It localises to the cytoplasm. In terms of biological role, participates actively in the response to hyperosmotic and heat shock by preventing the aggregation of stress-denatured proteins, in association with DnaK and GrpE. It is the nucleotide exchange factor for DnaK and may function as a thermosensor. Unfolded proteins bind initially to DnaJ; upon interaction with the DnaJ-bound protein, DnaK hydrolyzes its bound ATP, resulting in the formation of a stable complex. GrpE releases ADP from DnaK; ATP binding to DnaK triggers the release of the substrate protein, thus completing the reaction cycle. Several rounds of ATP-dependent interactions between DnaJ, DnaK and GrpE are required for fully efficient folding. The sequence is that of Protein GrpE from Rhodopseudomonas palustris (strain BisA53).